The sequence spans 688 residues: Amino-acid acetyltransferase, mitochondrial (688 aa).

A mitochondrion-targeting transit peptide spans 1-45 (MSSRALTWPRTAKSSLLKQQTSSFVGQPKLGTPNCRSFSSTADRP). Disordered regions lie at residues 1–59 (MSSR…SKSY) and 96–119 (LKAQHPPKAQTEPTTGHSKGTVTQ). 3 stretches are compositionally biased toward polar residues: residues 12–25 (AKSSLLKQQTSSFV), 34–57 (NCRSFSSTADRPINQSAEFSSSSK), and 106–119 (TEPTTGHSKGTVTQ). The region spanning 509 to 678 (NRPRLSLDDP…YEQVCRSIQP (170 aa)) is the N-acetyltransferase domain.

This sequence belongs to the acetyltransferase family.

The protein localises to the mitochondrion. The catalysed reaction is L-glutamate + acetyl-CoA = N-acetyl-L-glutamate + CoA + H(+). The protein operates within amino-acid biosynthesis; L-arginine biosynthesis; N(2)-acetyl-L-ornithine from L-glutamate: step 1/4. Functionally, N-acetylglutamate synthase involved in arginine biosynthesis. The polypeptide is Amino-acid acetyltransferase, mitochondrial (arg2) (Aspergillus flavus (strain ATCC 200026 / FGSC A1120 / IAM 13836 / NRRL 3357 / JCM 12722 / SRRC 167)).